The following is a 706-amino-acid chain: MNQELLSVGSKRRRTGGSLRGNPSSSQADEEQMNRVLEEEQQQPRHQEEEHAARNGEVVGAEPRPGDQNDPQQGQLEENNNRFISVDEDSSGNQEEQEEDEEHAGEQDEEDEEEEEMDQESDDFDQSDDSSREDEHTHRNSVTNSNSIVDLPIHQRSSPFYTKTTKMKRKLDHGSEVRSFSLGKKPCKVSEYTSTTGLVPCSATPTTFGDLRAANGQGQQRRRITSVQPPTGLQEWLKMFQSWSGPEKLLALDELIDSCEPTQVKHMMQVIEPQFQRDFISLLPKELALYVLSFLEPKDLLQAAQTCRYWRILAEDNLLWREKCKEEGIDEPLHIKRRKVIKPGFIHSPWKSAYIRQHRIDTNWRRGELKSPKVLKGHDDHVITCLQFCGNRIVSGSDDNTLKVWSAVTGKCLRTLVGHTGGVWSSQMRDNIIISGSTDRTLKVWNAETGECIHTLYGHTSTVRCMHLHEKRVVSGSRDATLRVWDIETGQCLHVLMGHVAAVRCVQYDGRRVVSGAYDFMVKVWDPETETCLHTLQGHTNRVYSLQFDGIHVVSGSLDTSIRVWDVETGNCIHTLTGHQSLTSGMELKDNILVSGNADSTVKIWDIKTGQCLQTLQGPNKHQSAVTCLQFNKNFVITSSDDGTVKLWDLKTGEFIRNLVTLESGGSGGVVWRIRASNTKLVCAVGSRNGTEETKLLVLDFDVDMK.

Residues 1 to 157 are disordered; that stretch reads MNQELLSVGS…IVDLPIHQRS (157 aa). Phosphoserine is present on Ser26. The segment covering 32–54 has biased composition (basic and acidic residues); that stretch reads QMNRVLEEEQQQPRHQEEEHAAR. Residues 69–83 show a composition bias toward polar residues; the sequence is NDPQQGQLEENNNRF. Positions 86–128 are enriched in acidic residues; it reads VDEDSSGNQEEQEEDEEHAGEQDEEDEEEEEMDQESDDFDQSD. Over residues 129 to 138 the composition is skewed to basic and acidic residues; sequence DSSREDEHTH. Phosphothreonine is present on Thr204. Residue Ser226 is modified to Phosphoserine. The F-box domain maps to 277-323; the sequence is RDFISLLPKELALYVLSFLEPKDLLQAAQTCRYWRILAEDNLLWREK. WD repeat units lie at residues 377-417, 419-455, 458-497, 499-535, 538-577, 579-617, and 621-658; these read GHDD…RTLV, HTGGVWSSQMRDNIIISGSTDRTLKVWNAETGECIHT, GHTSTVRCMHLHEKRVVSGSRDATLRVWDIETGQCLHVLM, HVAAVRCVQYDGRRVVSGAYDFMVKVWDPETETCLHT, GHTNRVYSLQFDGIHVVSGSLDTSIRVWDVETGNCIHTLT, HQSLTSGMELKDNILVSGNADSTVKIWDIKTGQCLQTLQ, and KHQSAVTCLQFNKNFVITSSDDGTVKLWDLKTGEFIRN.

As to quaternary structure, homodimer; homodimerization plays a role in substrate binding and/or ubiquitination and degradation. Component of the SCF(FBXW7) complex consisting of CUL1, RBX1, SKP1 and FBXW7. Interacts (via F-box domain) with SKP1. Interacts (via F-box domain) with pseudophosphatase STYX; the interaction is direct and prevents FBXW7 interaction with SKP1. Interacts with cyclin-E (CCNE1 or CCNE2). Interacts with PSEN1. Forms a trimeric complex with NOTCH1 and SGK1. Interacts with NOTCH1 intracellular domain/NICD and NOTCH4 intracellular domain/NICD. Interacts with NOTCH2 intracellular domain (N2ICD). Interacts with MYC (when phosphorylated). Interacts with USP28, counteracting ubiquitination of MYC. Interacts with JUN. Found in a complex with JUN and PRR7. Interacts with JUN and PRR7; the interaction inhibits ubiquitination-mediated JUN degradation, promoting its phosphorylation and transcriptional activity. Interacts (when phosphorylated at Thr-204) with PIN1, disrupting FBXW7 dimerization and promoting FBXW7 autoubiquitination and degradation. Interacts with UBE2QL1. Interacts with FAM83D; promotes FBXW7 degradation. Interacts with MYCN; FBXW7 competes with AURKA for binding to unphosphorylated MYCN but not for binding to phosphorylated MYCN. Interacts with STOML1. Interacts with NFE2L1. Interacts with USP36, counteracting ubiquitination of MYC. Interacts with RICTOR; mediates RICTOR ubiquitination and degradation.l Interacts with USP38, counteracting ubiquitination of MYC. In terms of assembly, (Microbial infection) In case of infection, interacts with T.annulata PIN1 (TaPIN1); leading to FBXW7 autoubiquitination and subsequent degradation: FBXW7 degradation promotes stabilization of JUN, which promotes cell transformation. Post-translationally, phosphorylation at Thr-204 promotes interaction with PIN1, leading to disrupt FBXW7 dimerization and promoting FBXW7 autoubiquitination and degradation. Phosphorylated by ATM at Ser-26 in response to DNA damage, promoting recruitment to DNA damage sites and 'Lys-63'-linked ubiquitination of phosphorylated XRCC4. In terms of processing, ubiquitinated: autoubiquitinates following phosphorylation at Thr-204 and subsequent interaction with PIN1. Ubiquitination leads to its degradation.

The protein localises to the nucleus. It is found in the nucleoplasm. Its subcellular location is the chromosome. It functions in the pathway protein modification; protein ubiquitination. In terms of biological role, substrate recognition component of a SCF (SKP1-CUL1-F-box protein) E3 ubiquitin-protein ligase complex which mediates the ubiquitination and subsequent proteasomal degradation of target proteins. Recognizes and binds phosphorylated sites/phosphodegrons within target proteins and thereafter brings them to the SCF complex for ubiquitination. Identified substrates include cyclin-E (CCNE1 or CCNE2), DISC1, JUN, MYC, NOTCH1 released notch intracellular domain (NICD), NOTCH2, MCL1, MLST8, RICTOR, and probably PSEN1. Acts as a negative regulator of JNK signaling by binding to phosphorylated JUN and promoting its ubiquitination and subsequent degradation. SCF(FBXW7) complex mediates the ubiquitination and subsequent degradation of NFE2L1. Involved in bone homeostasis and negative regulation of osteoclast differentiation. Also able to promote 'Lys-63'-linked ubiquitination in response to DNA damage. The SCF(FBXW7) complex facilitates double-strand break repair following phosphorylation by ATM: phosphorylation promotes localization to sites of double-strand breaks and 'Lys-63'-linked ubiquitination of phosphorylated XRCC4, enhancing DNA non-homologous end joining. The chain is F-box/WD repeat-containing protein 7 from Bos taurus (Bovine).